A 219-amino-acid chain; its full sequence is ER lumen protein-retaining receptor (219 aa).

Over 1 to 5 (MNPFR) the chain is Lumenal. A helical transmembrane segment spans residues 6–26 (ILGDLSHLTSILILIHNIKTT). The Cytoplasmic portion of the chain corresponds to 27–37 (RYIEGISFKTQ). Helical transmembrane passes span 38–58 (TLYALVFITRYLDLLTFHWVS) and 59–79 (LYNALMKIFFIVSTAYIVVLL). Residues 80–98 (QGSKRTNTIAYNEMLMHDT) are Cytoplasmic-facing. Residues 99–116 (FKIQHLLIGSALMSVFFH) form a helical membrane-spanning segment. Topologically, residues 117 to 118 (HK) are lumenal. The chain crosses the membrane as a helical span at residues 119–139 (FTFLELAWSFSVWLESVAILP). At 140–152 (QLYMLSKGGKTRS) the chain is on the cytoplasmic side. Residues 153-173 (LTVHYIFAMGLYRALYIPNWI) form a helical membrane-spanning segment. Topologically, residues 174-185 (WRYSTEDKKLDK) are lumenal. Residues 186-206 (IAFFAGLLQTLLYSDFFYIYY) form a helical membrane-spanning segment. Over 207–219 (TKVIRGKGFKLPK) the chain is Cytoplasmic.

The protein belongs to the ERD2 family.

The protein resides in the endoplasmic reticulum membrane. Its function is as follows. Required for the retention of luminal endoplasmic reticulum proteins. Determines the specificity of the luminal ER protein retention system. Also required for normal vesicular traffic through the Golgi. This receptor strongly recognizes H-D-E-L and weakly recognizes D-D-E-L and K-D-E-L. The chain is ER lumen protein-retaining receptor from Saccharomyces cerevisiae (strain ATCC 204508 / S288c) (Baker's yeast).